The primary structure comprises 2768 residues: Thyroglobulin (2768 aa).

The first 19 residues, 1–19 (MALVLEIFTLLASICWVSA), serve as a signal peptide directing secretion. Tyrosine 24 carries the iodotyrosine; alternate modification. Tyrosine 24 bears the Sulfotyrosine; alternate mark. Tyrosine 24 carries the post-translational modification Thyroxine; alternate. Triiodothyronine; alternate is present on tyrosine 24. Thyroglobulin type-1 domains follow at residues 31–92 (LRPC…PVAC), 93–160 (LSFC…PKRC), 161–297 (PRSC…RFRC), and 298–358 (PTKC…PPSC). 18 disulfides stabilise this stretch: cysteine 34–cysteine 52, cysteine 63–cysteine 70, cysteine 72–cysteine 92, cysteine 96–cysteine 120, cysteine 131–cysteine 138, cysteine 140–cysteine 160, cysteine 164–cysteine 183, cysteine 194–cysteine 235, cysteine 237–cysteine 297, cysteine 301–cysteine 319, cysteine 330–cysteine 336, cysteine 338–cysteine 358, cysteine 364–cysteine 620, cysteine 408–cysteine 608, cysteine 631–cysteine 636, cysteine 638–cysteine 658, cysteine 662–cysteine 687, and cysteine 698–cysteine 703. An N-linked (GlcNAc...) asparagine glycan is attached at asparagine 76. Tyrosine 108 carries the post-translational modification Iodotyrosine. Residue asparagine 110 is glycosylated (N-linked (GlcNAc...) asparagine). Tyrosine 149 carries the post-translational modification Iodotyrosine; alternate. The residue at position 149 (tyrosine 149) is a Diiodotyrosine; alternate. An N-linked (GlcNAc...) asparagine glycan is attached at asparagine 198. 2 positions are modified to iodotyrosine: tyrosine 234 and tyrosine 258. Residues asparagine 484 and asparagine 529 are each glycosylated (N-linked (GlcNAc...) asparagine). The segment at 521 to 545 (PLSVGLDSNSSTGTPEAAKKDGTMN) is disordered. 6 Thyroglobulin type-1 domains span residues 605–658 (SQTC…QPRC), 659–726 (PTDC…PKKC), 727–921 (PTPC…LPTC), 922–1073 (PGSC…IPQC), 1074–1145 (PTTC…SAQC), and 1146–1210 (PSLC…QPAC). Tyrosine 704 is modified (iodotyrosine; alternate). Position 704 is a thyroxine; alternate (tyrosine 704). Tyrosine 704 is modified (triiodothyronine; alternate). Position 704 is a diiodotyrosine; alternate (tyrosine 704). Intrachain disulfides connect cysteine 705/cysteine 726, cysteine 730/cysteine 763, cysteine 774/cysteine 898, cysteine 900/cysteine 921, cysteine 925/cysteine 1031, cysteine 1042/cysteine 1049, cysteine 1051/cysteine 1073, cysteine 1077/cysteine 1108, cysteine 1126/cysteine 1145, cysteine 1149/cysteine 1169, cysteine 1181/cysteine 1188, cysteine 1190/cysteine 1210, cysteine 1215/cysteine 1264, cysteine 1231/cysteine 1245, cysteine 1306/cysteine 1356, and cysteine 1331/cysteine 1347. The N-linked (GlcNAc...) asparagine glycan is linked to asparagine 748. Tyrosine 785 carries the post-translational modification Iodotyrosine. N-linked (GlcNAc...) asparagine glycosylation occurs at asparagine 816. Tyrosine 866 is subject to Iodotyrosine; alternate. At tyrosine 866 the chain carries Diiodotyrosine; alternate. Tyrosine 883 is subject to Diiodotyrosine. A glycan (N-linked (GlcNAc...) asparagine) is linked at asparagine 947. Residue tyrosine 992 is modified to Iodotyrosine; alternate. Position 992 is a diiodotyrosine; alternate (tyrosine 992). A glycan (N-linked (GlcNAc...) asparagine) is linked at asparagine 1220. An Iodotyrosine modification is found at tyrosine 1310. Tyrosine 1310 is modified (thyroxine). 3 N-linked (GlcNAc...) asparagine glycosylation sites follow: asparagine 1348, asparagine 1349, and asparagine 1365. Cystine bridges form between cysteine 1440-cysteine 1459, cysteine 1462-cysteine 1473, cysteine 1476-cysteine 1490, cysteine 1493-cysteine 1510, cysteine 1514-cysteine 1523, cysteine 1543-cysteine 1565, cysteine 1603-cysteine 1627, cysteine 1607-cysteine 1613, and cysteine 1639-cysteine 1662. Type II repeat units lie at residues 1456 to 1469 (GLGCVKCPEGSYSQ), 1470 to 1486 (DEECIPCPVGFYQEQAG), and 1487 to 1503 (SLACVPCPVGRTTISAG). Tyrosine 1467 carries the post-translational modification Iodotyrosine; alternate. Tyrosine 1467 is modified (diiodotyrosine; alternate). The Thyroglobulin type-1 11 domain occupies 1511–1565 (VTDCQRNEAGLQCDQNGQYRASQKDRGSGKAFCVDGEGRRLPWWETEAPLEDSQC). One copy of the Type IIIA repeat lies at 1603 to 1723 (CLTDCTEDEA…GANLTDAHLF (121 aa)). N-linked (GlcNAc...) asparagine glycosylation occurs at asparagine 1716. Disulfide bonds link cysteine 1724–cysteine 1749, cysteine 1728–cysteine 1734, cysteine 1733–cysteine 1835, and cysteine 1760–cysteine 1777. One copy of the Type IIIB repeat lies at 1724 to 1892 (CLLACDRDLC…LFSAQQANLW (169 aa)). 2 N-linked (GlcNAc...) asparagine glycosylation sites follow: asparagine 1774 and asparagine 1869. Intrachain disulfides connect cysteine 1893–cysteine 1919, cysteine 1897–cysteine 1904, cysteine 1928–cysteine 1939, cysteine 1996–cysteine 2024, cysteine 2000–cysteine 2006, cysteine 2005–cysteine 2076, and cysteine 2035–cysteine 2048. Residues 1893–1995 (CLSRCVQEHS…EKSISNGFFE (103 aa)) form a Type IIIA repeat. Residues 1996-2129 (CERRCDADPC…TSNFSAVRDL (134 aa)) form a Type IIIB repeat. Residue asparagine 2013 is glycosylated (N-linked (GlcNAc...) asparagine). Asparagine 2122 carries an N-linked (GlcNAc...) asparagine glycan. Disulfide bonds link cysteine 2130-cysteine 2154, cysteine 2134-cysteine 2140, and cysteine 2163-cysteine 2172. A Type IIIA repeat occupies 2130-2187 (CLSECSQHEACLITTLQTQPGAVRCMFYADTQSCTHSLQGQNCRLLLREEATHIYRKP). At tyrosine 2184 the chain carries Iodotyrosine. The cholinesterase-like (ChEL) stretch occupies residues 2188 to 2768 (GISLLSYEAS…QEPGSKTYSK (581 aa)). Asparagine 2250 carries an N-linked (GlcNAc...) asparagine glycan. Cysteine 2264 and cysteine 2281 are disulfide-bonded. A glycan (N-linked (GlcNAc...) asparagine) is linked at asparagine 2295. A disulfide bridge links cysteine 2442 with cysteine 2453. At tyrosine 2540 the chain carries Iodotyrosine. An Iodotyrosine; alternate modification is found at tyrosine 2573. Position 2573 is a thyroxine; alternate (tyrosine 2573). Tyrosine 2573 is modified (triiodothyronine; alternate). Diiodotyrosine; alternate is present on tyrosine 2573. An N-linked (GlcNAc...) asparagine glycan is attached at asparagine 2582. Iodotyrosine occurs at positions 2587 and 2617. Cysteines 2591 and 2715 form a disulfide. At tyrosine 2697 the chain carries Diiodotyrosine. Residues 2727-2768 (TSADGAKGGQSAESEEEELTAGSGLREDLLSLQEPGSKTYSK) form a disordered region. An O-linked (Xyl...) (chondroitin sulfate) serine glycan is attached at serine 2749. At tyrosine 2766 the chain carries Iodotyrosine; alternate. A Thyroxine; alternate modification is found at tyrosine 2766. The residue at position 2766 (tyrosine 2766) is a Triiodothyronine; alternate. At tyrosine 2766 the chain carries Diiodotyrosine; alternate.

The protein belongs to the type-B carboxylesterase/lipase family. Monomer. Homodimer (via ChEL region); occurs in the endoplasmic reticulum and is required for export to the Golgi apparatus. Homooligomer; disulfide-linked; stored in this form in the thyroid follicle lumen. Post-translationally, iodinated on tyrosine residues by TPO. There are 4 pairs of iodinated tyrosines used for coupling: acceptor Tyr-24 is coupled to donor Tyr-149 or Tyr-234, acceptor Tyr-2573 is coupled to donor Tyr-2540, acceptor Tyr-2766 in monomer 1 is coupled to donor Tyr-2766 in monomer 2 and acceptor Tyr-1310 in monomer 1 is coupled to donor Tyr-108 in monomer 2. In terms of processing, sulfated tyrosines are desulfated during iodination. Undergoes sequential proteolysis by cathepsins to release thyroxine (T4) and triiodothyronine (T3) hormones. In the thyroid follicle lumen, cross-linked TG (storage form) is solubilized by limited proteolysis mediated by cathepsins CTSB and/or CTSL. Partially cleaved TG is further processed by CTSK/cathepsin K and/or CTSL resulting in the release of T4. Following endocytosis, further processing occurs leading to the release of T3 and more T4 hormones. As to expression, specifically expressed in the thyroid gland.

Its subcellular location is the secreted. Its function is as follows. Acts as a substrate for the production of iodinated thyroid hormones thyroxine (T4) and triiodothyronine (T3). The synthesis of T3 and T4 involves iodination of selected tyrosine residues of TG/thyroglobulin followed by their oxidative coupling in the thyroid follicle lumen. Following TG re-internalization and lysosomal-mediated proteolysis, T3 and T4 are released from the polypeptide backbone leading to their secretion into the bloodstream. One dimer produces 7 thyroid hormone molecules. This Homo sapiens (Human) protein is Thyroglobulin.